The following is a 498-amino-acid chain: Minor fimbrium subunit Mfa1 (498 aa).

Residues 1 to 19 form the signal peptide; that stretch reads MKLNKMFLVGALLSLGFAS. The N-palmitoyl cysteine moiety is linked to residue Cys20. Cys20 carries the S-diacylglycerol cysteine lipid modification. Residues 20 to 50 constitute a propeptide that is removed on maturation; the sequence is CSKEGNGPAPDSSSTADTHMSVSMSLPQHNR. The disordered stretch occupies residues 436–476; sequence SGNPFVPTDPDPNNPDTPDNPDTPDPEDPDTPNPEEPLPVQ.

This sequence belongs to the bacteroidetes fimbrillin superfamily. FimA/Mfa1 family. As to quaternary structure, structural component of the fimbrial stalk. Minor fimbriae are composed of a structural subunit, such as the 53 kDa fimbrillin, and the accessory subunits Mfa3, Mfa4 and Mfa5. Fimbrium assembly occurs by linear, head-to-tail oligomerization of fimbrial subunits. This is mediated via insertion of a C-terminal beta-strand from one subunit into a groove in the N-terminal domain of the following subunit.

Its subcellular location is the fimbrium. It localises to the cell outer membrane. In terms of biological role, structural subunit of the minor fimbriae. These filamentous pili are attached to the cell surface; they mediate biofilm formation, adhesion onto host cells and onto other bacteria that are part of the oral microbiome. They play an important role in invasion of periodontal tissues and are recognized as major virulence factors. Mfa1 orthologs from different strains have highly divergent sequences, and this correlates with pathogenicity. This is Minor fimbrium subunit Mfa1 from Porphyromonas gingivalis (Bacteroides gingivalis).